The primary structure comprises 66 residues: MAFLKKSLFLVLFLGLVSLSICEEEKRETEEEEHDQEEDDKSEEKRFLSLIPHIVSGVASLAKHFG.

The first 22 residues, methionine 1 to cysteine 22, serve as a signal peptide directing secretion. Residues glutamate 23 to arginine 46 constitute a propeptide that is removed on maturation. Residues glutamate 25–glutamate 44 form a disordered region. Residues glutamate 30–lysine 41 show a composition bias toward acidic residues. The residue at position 65 (phenylalanine 65) is a Phenylalanine amide.

As to expression, expressed by the skin glands.

It localises to the secreted. It is found in the target cell membrane. Antimicrobial peptide with high activity against Gram-positive bacteria, moderate activity against Gram-negative bacteria, and moderate activity against fungi. Acts by causing bacterial membrane disruption inducing leakage of the intracellular content followed by cell death. It adopts an alpha-helical amphipathic structure in membrane environments. Also shows highly potent antiparasitic activity against Leishmania species. Shows moderate hemolytic activity on human erythrocytes (LC(50)=25 uM). Is also active on human monocytes (IC(50)=22.5 uM). This Phyllomedusa sauvagei (Sauvage's leaf frog) protein is Phylloseptin-S2.